Here is a 116-residue protein sequence, read N- to C-terminus: uncharacterized protein (116 aa).

3 helical membrane-spanning segments follow: residues 5–27 (AILLSLAGIADSSYLLLSEAVPC), 42–64 (PFVPALLGLCWFVLSIVVFTAGV), and 88–110 (VLHGYFCPYCFTAYGIGIVVVAI).

The protein resides in the cell membrane. This is an uncharacterized protein from Archaeoglobus fulgidus (strain ATCC 49558 / DSM 4304 / JCM 9628 / NBRC 100126 / VC-16).